Here is a 179-residue protein sequence, read N- to C-terminus: Large ribosomal subunit protein uL22c (179 aa).

The protein belongs to the universal ribosomal protein uL22 family. Part of the 50S ribosomal subunit.

Its subcellular location is the plastid. The protein resides in the chloroplast. Its function is as follows. This protein binds specifically to 23S rRNA. The globular domain of the protein is located near the polypeptide exit tunnel on the outside of the subunit, while an extended beta-hairpin is found that lines the wall of the exit tunnel in the center of the 70S ribosome. The protein is Large ribosomal subunit protein uL22c (rpl22) of Ranunculus macranthus (Large buttercup).